A 306-amino-acid polypeptide reads, in one-letter code: Pantothenate kinase (306 aa).

Residue 91–98 (GSVAVGKS) participates in ATP binding.

Belongs to the prokaryotic pantothenate kinase family.

It localises to the cytoplasm. The enzyme catalyses (R)-pantothenate + ATP = (R)-4'-phosphopantothenate + ADP + H(+). It functions in the pathway cofactor biosynthesis; coenzyme A biosynthesis; CoA from (R)-pantothenate: step 1/5. The polypeptide is Pantothenate kinase (Streptococcus pneumoniae (strain JJA)).